Consider the following 706-residue polypeptide: Semenogelin-2 (706 aa).

Positions 1–23 are cleaved as a signal peptide; the sequence is MKSIILFVLSLLLILEKQAAVMG. Disordered stretches follow at residues 25–62, 131–156, and 276–678; these read KGGS…SKGS, KGGQ…KGIF, and NLNQ…SGAH. A compositionally biased stretch (basic and acidic residues) spans 50–59; sequence GQKDKQHTES. Positions 137 to 151 are enriched in polar residues; it reads HGTQNPSQDQGNSPS. A compositionally biased stretch (basic and acidic residues) spans 297–308; sequence TEERQPNHEENS. The span at 329–339 shows a compositional bias: polar residues; it reads KSQNQVTIPSQ. Over residues 340 to 349 the composition is skewed to basic and acidic residues; it reads DQEHGHKENK. Residues 389–399 show a composition bias toward polar residues; sequence KSQNQVTIPSQ. Positions 400-409 are enriched in basic and acidic residues; the sequence is DQEHGHKENK. Residues 449–459 show a composition bias toward polar residues; sequence KSQNQVTIPSQ. Basic and acidic residues predominate over residues 460–469; the sequence is DQEHGHKENK. The span at 509–519 shows a compositional bias: polar residues; sequence KSQNQVAIPSQ. Residues 520–529 show a composition bias toward basic and acidic residues; that stretch reads DQEHGHKENK. Residues 569–579 are compositionally biased toward polar residues; that stretch reads KSQNQVTIPSQ. Residues 580–589 show a composition bias toward basic and acidic residues; the sequence is DQEHGHKENK. Composition is skewed to polar residues over residues 611–622 and 630–653; these read KDVSQSSLSFQT and SQIQ…NSGK. Basic and acidic residues predominate over residues 654–670; that stretch reads SADREQDLLSHEQEGRY.

The protein belongs to the semenogelin family. In terms of assembly, interacts with SERPINA5.

The protein localises to the secreted. Its function is as follows. Participates in the formation of a gel matrix (sperm coagulum) entrapping the accessory gland secretions and ejaculated spermatozoa. This is Semenogelin-2 (SEMG2) from Macaca mulatta (Rhesus macaque).